The primary structure comprises 380 residues: Ribosomal RNA large subunit methyltransferase G (380 aa).

This sequence belongs to the methyltransferase superfamily. RlmG family.

The protein localises to the cytoplasm. The enzyme catalyses guanosine(1835) in 23S rRNA + S-adenosyl-L-methionine = N(2)-methylguanosine(1835) in 23S rRNA + S-adenosyl-L-homocysteine + H(+). Specifically methylates the guanine in position 1835 (m2G1835) of 23S rRNA. In Streptomyces avermitilis (strain ATCC 31267 / DSM 46492 / JCM 5070 / NBRC 14893 / NCIMB 12804 / NRRL 8165 / MA-4680), this protein is Ribosomal RNA large subunit methyltransferase G.